Reading from the N-terminus, the 197-residue chain is Probable inosine/xanthosine triphosphatase (197 aa).

9–14 (TSNPIK) serves as a coordination point for substrate. Residues Asp-36 and Asp-65 each coordinate Mg(2+).

It belongs to the YjjX NTPase family. As to quaternary structure, homodimer. Requires Mg(2+) as cofactor. Mn(2+) is required as a cofactor.

It carries out the reaction XTP + H2O = XDP + phosphate + H(+). The enzyme catalyses ITP + H2O = IDP + phosphate + H(+). Functionally, phosphatase that hydrolyzes non-canonical purine nucleotides such as XTP and ITP to their respective diphosphate derivatives. Probably excludes non-canonical purines from DNA/RNA precursor pool, thus preventing their incorporation into DNA/RNA and avoiding chromosomal lesions. The protein is Probable inosine/xanthosine triphosphatase of Aeropyrum pernix (strain ATCC 700893 / DSM 11879 / JCM 9820 / NBRC 100138 / K1).